The following is an 88-amino-acid chain: Apolipoprotein C-I (88 aa).

A signal peptide spans 1-26 (MRLILSLPVLVVVLSMVLEGPAPAQA).

Belongs to the apolipoprotein C1 family. In terms of tissue distribution, expressed in the liver.

It is found in the secreted. Its function is as follows. Inhibitor of lipoprotein binding to the low density lipoprotein (LDL) receptor, LDL receptor-related protein, and very low density lipoprotein (VLDL) receptor. Associates with high density lipoproteins (HDL) and the triacylglycerol-rich lipoproteins in the plasma and makes up about 10% of the protein of the VLDL and 2% of that of HDL. Appears to interfere directly with fatty acid uptake and is also the major plasma inhibitor of cholesteryl ester transfer protein (CETP). Binds free fatty acids and reduces their intracellular esterification. Modulates the interaction of APOE with beta-migrating VLDL and inhibits binding of beta-VLDL to the LDL receptor-related protein. The polypeptide is Apolipoprotein C-I (APOC1) (Canis lupus familiaris (Dog)).